A 112-amino-acid polypeptide reads, in one-letter code: 2Fe-2S ferredoxin (112 aa).

A 2Fe-2S ferredoxin-type domain is found at 1-104 (MPQIVILPHA…DLVVEIPKYT (104 aa)). Cys42, Cys48, Cys51, and Cys87 together coordinate [2Fe-2S] cluster.

This sequence belongs to the adrenodoxin/putidaredoxin family. [2Fe-2S] cluster is required as a cofactor.

In terms of biological role, ferredoxin are iron-sulfur proteins that transfer electrons in a wide variety of metabolic reactions. This is 2Fe-2S ferredoxin (fdx) from Pseudomonas aeruginosa (strain ATCC 15692 / DSM 22644 / CIP 104116 / JCM 14847 / LMG 12228 / 1C / PRS 101 / PAO1).